The sequence spans 62 residues: MTNHIHFRCPCCHGSQYRTSSFDVSDMNPFGAKCIFCKSMMITFDNISQYLNASRLSLDLKK.

The protein belongs to the YmcF/YnqF peptide family.

This chain is Protein YnfQ, found in Escherichia coli (strain K12).